A 184-amino-acid polypeptide reads, in one-letter code: Uroplakin-2 (184 aa).

The N-terminal stretch at 1–25 (MASTLPVQTLPLILILLAVLAPGTA) is a signal peptide. A propeptide spanning residues 26–84 (DFNISSLSGLLSPALTESLLIALPPCHLTGGNATLMVRRANDSKVVKSDFVVPPCRGRR) is cleaved from the precursor. Residues N28, N57, and N66 are each glycosylated (N-linked (GlcNAc...) asparagine). The Lumenal segment spans residues 85–155 (ELVSVVDSGS…IGLGMARTGG (71 aa)). Residues 156-180 (MVVITVLLSVAMFLLVVGLIVALHW) traverse the membrane as a helical segment. Residues 181–184 (DARK) lie on the Cytoplasmic side of the membrane.

Belongs to the uroplakin-2 family. Interacts with uroplakin-1a (UPK1A).

The protein localises to the cell membrane. Component of the asymmetric unit membrane (AUM); a highly specialized biomembrane elaborated by terminally differentiated urothelial cells. May play an important role in regulating the assembly of the AUM. This chain is Uroplakin-2 (Upk2), found in Mus musculus (Mouse).